Here is a 313-residue protein sequence, read N- to C-terminus: Dihydroorotate dehydrogenase B (NAD(+)), catalytic subunit (313 aa).

FMN contacts are provided by residues Ser21 and 45–46; that span reads KA. Substrate contacts are provided by residues Lys45 and 69–73; that span reads NAIGL. Positions 99 and 127 each coordinate FMN. A substrate-binding site is contributed by Asn127. The Nucleophile role is filled by Cys130. FMN contacts are provided by Lys165 and Ile191. 192 to 193 is a binding site for substrate; that stretch reads NT. FMN-binding positions include Gly217, 243 to 244, and 265 to 266; these read GG and GT.

The protein belongs to the dihydroorotate dehydrogenase family. Type 1 subfamily. Heterotetramer of 2 PyrK and 2 PyrD type B subunits. FMN serves as cofactor.

It is found in the cytoplasm. It carries out the reaction (S)-dihydroorotate + NAD(+) = orotate + NADH + H(+). Its pathway is pyrimidine metabolism; UMP biosynthesis via de novo pathway; orotate from (S)-dihydroorotate (NAD(+) route): step 1/1. Catalyzes the conversion of dihydroorotate to orotate with NAD(+) as electron acceptor. In Geobacillus sp. (strain WCH70), this protein is Dihydroorotate dehydrogenase B (NAD(+)), catalytic subunit (pyrD).